A 333-amino-acid polypeptide reads, in one-letter code: Anthranilate phosphoribosyltransferase (333 aa).

Residues Gly78, 81–82, Thr86, 88–91, 106–114, and Ser118 contribute to the 5-phospho-alpha-D-ribose 1-diphosphate site; these read GD, NVST, and KHGNYSVSS. Gly78 lines the anthranilate pocket. Ser90 serves as a coordination point for Mg(2+). Position 109 (Asn109) interacts with anthranilate. Arg164 contributes to the anthranilate binding site. Positions 222 and 223 each coordinate Mg(2+).

The protein belongs to the anthranilate phosphoribosyltransferase family. Homodimer. Mg(2+) serves as cofactor.

The catalysed reaction is N-(5-phospho-beta-D-ribosyl)anthranilate + diphosphate = 5-phospho-alpha-D-ribose 1-diphosphate + anthranilate. Its pathway is amino-acid biosynthesis; L-tryptophan biosynthesis; L-tryptophan from chorismate: step 2/5. Catalyzes the transfer of the phosphoribosyl group of 5-phosphorylribose-1-pyrophosphate (PRPP) to anthranilate to yield N-(5'-phosphoribosyl)-anthranilate (PRA). In Natronomonas pharaonis (strain ATCC 35678 / DSM 2160 / CIP 103997 / JCM 8858 / NBRC 14720 / NCIMB 2260 / Gabara) (Halobacterium pharaonis), this protein is Anthranilate phosphoribosyltransferase.